Consider the following 247-residue polypeptide: MSKLFWAMLAFISRLPVPTRWSQGLDFEEYSRGIVTFPLIGMLLGAIGGLVFVALQSWCGIPLAALFCVLTLALLTGGFHLDGLADTCDGIFSARRRERMLEIMRDSRLGTHGGLALIFVLLAKVLVISELALRGTPMLAALAMACAAGRGVAVLLMYRHRYAREEGLGNVFIGKVTGRQTCVTLGLTAILAAILMPGMHGVAALVVTLAAIFILGQLLKRTLGGQTGDTLGAAIELGELIFLLALL.

The next 6 helical transmembrane spans lie at 34 to 54, 59 to 79, 113 to 133, 138 to 158, 171 to 193, and 194 to 214; these read IVTFPLIGMLLGAIGGLVFVA, CGIPLAALFCVLTLALLTGGF, GGLALIFVLLAKVLVISELAL, MLAALAMACAAGRGVAVLLMY, VFIGKVTGRQTCVTLGLTAILAA, and ILMPGMHGVAALVVTLAAIFI.

The protein belongs to the CobS family. It depends on Mg(2+) as a cofactor.

Its subcellular location is the cell inner membrane. The enzyme catalyses alpha-ribazole + adenosylcob(III)inamide-GDP = adenosylcob(III)alamin + GMP + H(+). It carries out the reaction alpha-ribazole 5'-phosphate + adenosylcob(III)inamide-GDP = adenosylcob(III)alamin 5'-phosphate + GMP + H(+). It functions in the pathway cofactor biosynthesis; adenosylcobalamin biosynthesis; adenosylcobalamin from cob(II)yrinate a,c-diamide: step 7/7. In terms of biological role, joins adenosylcobinamide-GDP and alpha-ribazole to generate adenosylcobalamin (Ado-cobalamin). Also synthesizes adenosylcobalamin 5'-phosphate from adenosylcobinamide-GDP and alpha-ribazole 5'-phosphate. The polypeptide is Adenosylcobinamide-GDP ribazoletransferase (Citrobacter koseri (strain ATCC BAA-895 / CDC 4225-83 / SGSC4696)).